A 447-amino-acid polypeptide reads, in one-letter code: Argininosuccinate synthase (447 aa).

Residues 20–28 and Ala-46 contribute to the ATP site; that span reads AFSGGLDTS. Residue Tyr-102 participates in L-citrulline binding. 2 residues coordinate ATP: Gly-132 and Thr-134. Thr-134, Asn-138, and Asp-139 together coordinate L-aspartate. Asn-138 is an L-citrulline binding site. Asp-139 is an ATP binding site. Positions 142 and 195 each coordinate L-citrulline. ATP is bound at residue Asp-197. Residues Thr-204, Glu-206, and Glu-283 each coordinate L-citrulline.

Belongs to the argininosuccinate synthase family. Type 2 subfamily. As to quaternary structure, homotetramer.

The protein localises to the cytoplasm. The catalysed reaction is L-citrulline + L-aspartate + ATP = 2-(N(omega)-L-arginino)succinate + AMP + diphosphate + H(+). Its pathway is amino-acid biosynthesis; L-arginine biosynthesis; L-arginine from L-ornithine and carbamoyl phosphate: step 2/3. This chain is Argininosuccinate synthase (argG), found in Neisseria meningitidis serogroup B (strain ATCC BAA-335 / MC58).